We begin with the raw amino-acid sequence, 244 residues long: MAEMKNLKIEVVRYNPEVDTAPHSAFYEVPYDATTSLLDALGYIKDNLAPDLSYRWSCRMAICGSCGMMVNNVPKLACKTFLRDYTDGMKVEALANFPIERDLVVDMTHFIESLEAIKPYIIGNSRTADQGTNIQTPAQMAKYHQFSGCINCGLCYAACPQFGLNPEFIGPAAITLAHRYNEDSRDHGKKERMAQLNSQNGVWSCTFVGYCSEVCPKHVDPAAAIQQGKVESSKDFLIATLKPR.

Residue Tyr-14 participates in a menaquinone binding. The 2Fe-2S ferredoxin-type domain maps to 16 to 97 (PEVDTAPHSA…GMKVEALANF (82 aa)). Cys-58, Cys-63, Cys-66, and Cys-78 together coordinate [2Fe-2S] cluster. The 4Fe-4S ferredoxin-type domain maps to 140-169 (MAKYHQFSGCINCGLCYAACPQFGLNPEFI). [4Fe-4S] cluster-binding residues include Cys-149, Cys-152, and Cys-155. [3Fe-4S] cluster-binding residues include Cys-159, Cys-205, and Cys-211. Cys-215 contributes to the [4Fe-4S] cluster binding site. A menaquinone is bound at residue 226-229 (QQGK).

The protein belongs to the succinate dehydrogenase/fumarate reductase iron-sulfur protein family. As to quaternary structure, fumarate dehydrogenase forms part of an enzyme complex containing four subunits: a flavoprotein, an iron-sulfur, and two hydrophobic anchor proteins. The cofactor is [2Fe-2S] cluster. It depends on [3Fe-4S] cluster as a cofactor. [4Fe-4S] cluster serves as cofactor.

It is found in the cell inner membrane. The catalysed reaction is a quinone + succinate = fumarate + a quinol. It catalyses the reaction a menaquinone + succinate = a menaquinol + fumarate. In terms of biological role, two distinct, membrane-bound, FAD-containing enzymes are responsible for the catalysis of fumarate and succinate interconversion; the fumarate reductase is used in anaerobic growth, and the succinate dehydrogenase is used in aerobic growth. This Escherichia coli O157:H7 protein is Fumarate reductase iron-sulfur subunit (frdB).